The primary structure comprises 387 residues: S-adenosylmethionine synthase (387 aa).

ATP is bound at residue histidine 17. Aspartate 19 is a binding site for Mg(2+). Glutamate 45 serves as a coordination point for K(+). Glutamate 58 and glutamine 101 together coordinate L-methionine. The segment at 101-111 (QSPDIAQGVDR) is flexible loop. ATP is bound by residues 168–170 (DAK), 234–235 (RF), aspartate 243, 249–250 (RK), alanine 266, and lysine 270. L-methionine is bound at residue aspartate 243. Lysine 274 is a binding site for L-methionine.

This sequence belongs to the AdoMet synthase family. In terms of assembly, homotetramer; dimer of dimers. Mg(2+) serves as cofactor. K(+) is required as a cofactor.

It localises to the cytoplasm. The enzyme catalyses L-methionine + ATP + H2O = S-adenosyl-L-methionine + phosphate + diphosphate. It functions in the pathway amino-acid biosynthesis; S-adenosyl-L-methionine biosynthesis; S-adenosyl-L-methionine from L-methionine: step 1/1. Functionally, catalyzes the formation of S-adenosylmethionine (AdoMet) from methionine and ATP. The overall synthetic reaction is composed of two sequential steps, AdoMet formation and the subsequent tripolyphosphate hydrolysis which occurs prior to release of AdoMet from the enzyme. In Bordetella bronchiseptica (strain ATCC BAA-588 / NCTC 13252 / RB50) (Alcaligenes bronchisepticus), this protein is S-adenosylmethionine synthase.